A 942-amino-acid chain; its full sequence is MAPPVLRPDNAIKRADELISVGESQAALQSLYEYLTARKIRFAQPSTVEPIVFKFLELGVDLKRGRLIKDALHQYKKLVQGSQDGLSSVGAVARKFIDCVETKMAFEHLKAEESQTEEDDDLEGGVTPENLLKSVYIQDQSVAGFNDEVVTSWLKFTWESYRAVLDLVRNNSQLEITYAGVVNRTMQFCLKYNRKNEFKRLAEMLRQHLDAANYQQSKIGSNIVDLSDSETLQRYLDQRFLQLNVSVKLELWHEAFRSIEDVYHLMKMSKHTPKSSTLANYYENLAKVFLISNAQLLHTATWEKFYRLYQSNPNATEEDFKKYSSIILLSALSTPLDILPTVGYDPQMRLYRLLGLESRPTRNEMIELAKQEDIYKHIDEDIIKLYEIMEINYNADTIKTEIAALLPKLEAKPYFKQYINQLRNVLLRKNYVSLSETENAIPTDALYDKASLPGVLSLPHWDMEKTLLQAAVEDYVSISIDHDSNTVTFFKDPFEIISKAAGTVEEEEEEEEEEGEEVEGEEAETGEEIVEEGEEHENEENKEPEPVITRTTFIRNRLAELSNVLEEIDAFKNASYLEKVKLARETLITQTKDSIENLKQIAEDRAKRAQEQKKKYMASAAVRAEEDAEIRQRQILEEKAALEAKLEQDAHRRLVEKKKREFEDLKQREIQKFIDEFNKKDHAAKIASEEVQGLDIKEIKTLIFSKLSQDKSELEDRMTSSLQKLDHAERAYRKSELPLLRKEAESLKETDMNKFNDMKSKIVDTARAEFDAKMEDHNRLVGVYNDYVSLKDRLTTTVEEKFKLIRAENAAKFEAAKKARIEEVRKQRYEELVAERKAEIEAEEREERAKKQEETARKQKEMEEAAERKSKASSAAAAKSILTGGNDARSAKLDEIARRQREIEQAAERKAQGPSASTEAPDDEGRNLTYAEKMKLRRASKK.

The PCI domain maps to F320–F494. Coiled-coil stretches lie at residues K499–I529, I588–E669, S705–K734, and I821–Q912. Residues G502–P546 form a disordered region. A compositionally biased stretch (acidic residues) spans V504–N538. Basic and acidic residues-rich tracts occupy residues R836 to S870 and R889 to A911. Residues R836–K942 form a disordered region.

Belongs to the eIF-3 subunit A family. As to quaternary structure, component of the eukaryotic translation initiation factor 3 (eIF-3) complex.

Its subcellular location is the cytoplasm. RNA-binding component of the eukaryotic translation initiation factor 3 (eIF-3) complex, which is involved in protein synthesis of a specialized repertoire of mRNAs and, together with other initiation factors, stimulates binding of mRNA and methionyl-tRNAi to the 40S ribosome. The eIF-3 complex specifically targets and initiates translation of a subset of mRNAs involved in cell proliferation. This Vanderwaltozyma polyspora (strain ATCC 22028 / DSM 70294 / BCRC 21397 / CBS 2163 / NBRC 10782 / NRRL Y-8283 / UCD 57-17) (Kluyveromyces polysporus) protein is Eukaryotic translation initiation factor 3 subunit A.